Here is a 292-residue protein sequence, read N- to C-terminus: CCR4-NOT transcription complex subunit 8 (292 aa).

Residues D40, E42, D161, and D230 each contribute to the a divalent metal cation site.

It belongs to the CAF1 family. Component of the CCR4-NOT complex; distinct complexes seem to exist that differ in the participation of probably mutually exclusive catalytic subunits; the complex contains two deadenylase subunits, CNOT6 or CNOT6L, and CNOT7 or CNOT8. In the complex interacts directly with CNOT1. Interacts with BTG1, BTG2 and TOB1. Interacts with BTG4.

Its subcellular location is the cytoplasm. It localises to the nucleus. The catalysed reaction is Exonucleolytic cleavage of poly(A) to 5'-AMP.. Has 3'-5' poly(A) exoribonuclease activity for synthetic poly(A) RNA substrate. Its function seems to be partially redundant with that of CNOT7. Catalytic component of the CCR4-NOT complex which is linked to various cellular processes including bulk mRNA degradation, miRNA-mediated repression, translational repression during translational initiation and general transcription regulation. During miRNA-mediated repression the complex also seems to act as translational repressor during translational initiation. Additional complex functions may be a consequence of its influence on mRNA expression. Associates with members of the BTG family such as TOB1 and BTG2 and is required for their anti-proliferative activity. In Mus musculus (Mouse), this protein is CCR4-NOT transcription complex subunit 8 (Cnot8).